Here is a 264-residue protein sequence, read N- to C-terminus: Glutamate racemase (264 aa).

Residues 12 to 13 and 44 to 45 each bind substrate; these read DS and YG. The Proton donor/acceptor role is filled by Cys75. 76–77 provides a ligand contact to substrate; it reads NT. The active-site Proton donor/acceptor is Cys186. Substrate is bound at residue 187 to 188; it reads TH.

Belongs to the aspartate/glutamate racemases family.

It carries out the reaction L-glutamate = D-glutamate. Its pathway is cell wall biogenesis; peptidoglycan biosynthesis. Functionally, provides the (R)-glutamate required for cell wall biosynthesis. The protein is Glutamate racemase of Stutzerimonas stutzeri (strain A1501) (Pseudomonas stutzeri).